A 653-amino-acid polypeptide reads, in one-letter code: Epithelial sodium channel subunit gamma (653 aa).

At 1-54 (MGHGRRISESIKKQLPVTGPEAPTVKNLMDWYLNNTNTHGCRRIAVSRGYLRRW) the chain is on the cytoplasmic side. Residues 55–75 (IWICFTVSSVGMIFWQWTLLL) form a helical membrane-spanning segment. At 76-546 (MSYYTVSVSV…GGQLGLWMSC (471 aa)) the chain is on the extracellular side. 8 cysteine pairs are disulfide-bonded: cysteine 100–cysteine 290, cysteine 214–cysteine 221, cysteine 267–cysteine 274, cysteine 379–cysteine 464, cysteine 401–cysteine 460, cysteine 405–cysteine 456, cysteine 414–cysteine 441, and cysteine 416–cysteine 430. Residues 547 to 567 (SIVCFLEMWEVFLVDILTIIA) traverse the membrane as a helical segment. Residues 568–653 (RYWLHRGRQW…DEQVSDTEVN (86 aa)) are Cytoplasmic-facing. The interval 582 to 608 (KERQMQQPSPPDHDTGHHNPVCIDDED) is disordered.

The protein belongs to the amiloride-sensitive sodium channel (TC 1.A.6) family. SCNN1G subfamily. In terms of assembly, component of the heterotrimeric epithelial sodium channel (ENaC) composed of an alpha/SCNN1A, a beta/SCNN1B and a gamma/SCNN1G subunit. Strongly expressed in gill, liver, kidney and rectum and more weakly in heart, muscle and intestine.

The protein resides in the apical cell membrane. The enzyme catalyses Na(+)(in) = Na(+)(out). Originally identified and characterized by its inhibition by the diuretic drug amiloride. This is one of the three pore-forming subunits of the heterotrimeric epithelial sodium channel (ENaC), a critical regulator of sodium balance and fluid homeostasis. ENaC operates in epithelial tissues, where it mediates the electrodiffusion of sodium ions from extracellular fluid through the apical membrane of cells, with water following osmotically. The protein is Epithelial sodium channel subunit gamma of Neoceratodus forsteri (Australian lungfish).